A 577-amino-acid chain; its full sequence is External alternative NAD(P)H-ubiquinone oxidoreductase B1, mitochondrial (577 aa).

The N-terminal 35 residues, 1 to 35 (MRGFTYLSKVLHSHSSYSKLLVLCSVSTGGLLVYA), are a transit peptide targeting the mitochondrion. 57–87 (RVVVLGTGWGGTSFLKDVDISSYDVQVVSPR) is an FAD binding site. Residue 221–257 (LHFVIVGGGPTGVEFAAELHDYVYEDLVKIYPSVKDF) participates in NAD(+) binding. One can recognise an EF-hand domain in the interval 378–413 (KVMEDISAIFKAADKDDSGTLSIEEFRDVLEDIIIR). Residues aspartate 391, aspartate 393, serine 395, threonine 397, and glutamate 402 each coordinate Ca(2+). The Microbody targeting signal motif lies at 568–577 (YIFGRDSSRI).

This sequence belongs to the NADH dehydrogenase family. The cofactor is FAD.

Its subcellular location is the mitochondrion inner membrane. The protein localises to the peroxisome. It carries out the reaction a quinone + NADH + H(+) = a quinol + NAD(+). The enzyme catalyses a ubiquinone + NADH + H(+) = a ubiquinol + NAD(+). With respect to regulation, activity is calcium-dependent with a more pronounced effect at higher pH. In terms of biological role, alternative NADH-ubiquinone oxidoreductase which catalyzes the oxidation of mitochondrial NADH does not translocate protons across the inner mitochondrial membrane. Calcium-dependent NAD(P)H dehydrogenase. Binds calcium ions. The sequence is that of External alternative NAD(P)H-ubiquinone oxidoreductase B1, mitochondrial (NDB1) from Solanum tuberosum (Potato).